Consider the following 79-residue polypeptide: Small ribosomal subunit protein uS17 (79 aa).

Belongs to the universal ribosomal protein uS17 family. In terms of assembly, part of the 30S ribosomal subunit.

One of the primary rRNA binding proteins, it binds specifically to the 5'-end of 16S ribosomal RNA. The polypeptide is Small ribosomal subunit protein uS17 (Rhizobium johnstonii (strain DSM 114642 / LMG 32736 / 3841) (Rhizobium leguminosarum bv. viciae)).